Here is a 385-residue protein sequence, read N- to C-terminus: Probable tRNA sulfurtransferase (385 aa).

The 105-residue stretch at 57–161 (NESIKRLSNV…NKNAYVWSNK (105 aa)) folds into the THUMP domain. ATP-binding positions include 181 to 182 (ML), 206 to 207 (YY), Arg-263, Gly-285, and Gln-294.

This sequence belongs to the ThiI family.

It is found in the cytoplasm. It carries out the reaction [ThiI sulfur-carrier protein]-S-sulfanyl-L-cysteine + a uridine in tRNA + 2 reduced [2Fe-2S]-[ferredoxin] + ATP + H(+) = [ThiI sulfur-carrier protein]-L-cysteine + a 4-thiouridine in tRNA + 2 oxidized [2Fe-2S]-[ferredoxin] + AMP + diphosphate. The catalysed reaction is [ThiS sulfur-carrier protein]-C-terminal Gly-Gly-AMP + S-sulfanyl-L-cysteinyl-[cysteine desulfurase] + AH2 = [ThiS sulfur-carrier protein]-C-terminal-Gly-aminoethanethioate + L-cysteinyl-[cysteine desulfurase] + A + AMP + 2 H(+). Its pathway is cofactor biosynthesis; thiamine diphosphate biosynthesis. In terms of biological role, catalyzes the ATP-dependent transfer of a sulfur to tRNA to produce 4-thiouridine in position 8 of tRNAs, which functions as a near-UV photosensor. Also catalyzes the transfer of sulfur to the sulfur carrier protein ThiS, forming ThiS-thiocarboxylate. This is a step in the synthesis of thiazole, in the thiamine biosynthesis pathway. The sulfur is donated as persulfide by IscS. The chain is Probable tRNA sulfurtransferase from Clostridium botulinum (strain Alaska E43 / Type E3).